The chain runs to 330 residues: MKTAYIAKQRQISFVKLHFSRQLEERLGLIEVQAPILSRVGDGTQDNLSGCEKAVQVKVKALPDAQFEVVHSLAKWKRQTLGQHDFSAGEGLYTHMKALRPDEDRLSPLHSVYVDQWDWERVMGDGERQFSTLKSTVEAIWAGIKATEAEVHKQFGLAPFLPEQIQFVHSQELLSRYPDLDAKGRERAIAKELGAVFLVGIGGKLSDGHRHDVRAPDYDDWSSASELGYAGLNGDILVWNPVLEDAFELSSMGIRVDADTLMRQLALTGDEDRLQLEWHQALLRGEMPQTIGGGIGQSRLTMLLLQLPHIGQVQCGVWPAQVRESIPAIL.

The protein belongs to the class-II aminoacyl-tRNA synthetase family. AsnA subfamily.

It localises to the cytoplasm. It carries out the reaction L-aspartate + NH4(+) + ATP = L-asparagine + AMP + diphosphate + H(+). It functions in the pathway amino-acid biosynthesis; L-asparagine biosynthesis; L-asparagine from L-aspartate (ammonia route): step 1/1. This is Aspartate--ammonia ligase from Salmonella newport (strain SL254).